A 292-amino-acid chain; its full sequence is 33 kDa chaperonin (292 aa).

2 disulfide bridges follow: Cys-230–Cys-232 and Cys-263–Cys-266.

This sequence belongs to the HSP33 family. Post-translationally, under oxidizing conditions two disulfide bonds are formed involving the reactive cysteines. Under reducing conditions zinc is bound to the reactive cysteines and the protein is inactive.

Its subcellular location is the cytoplasm. Functionally, redox regulated molecular chaperone. Protects both thermally unfolding and oxidatively damaged proteins from irreversible aggregation. Plays an important role in the bacterial defense system toward oxidative stress. This chain is 33 kDa chaperonin, found in Enterobacter sp. (strain 638).